Here is a 277-residue protein sequence, read N- to C-terminus: Collectin-10 (277 aa).

Positions 1–27 (MNGFASLLRRNQFILLVLFLLQIQSLG) are cleaved as a signal peptide. The segment at 40 to 107 (ATHTISPGPK…GDKGEKGLLG (68 aa)) is disordered. Residues 49-64 (KGDDGEKGDPGEEGKH) are compositionally biased toward basic and acidic residues. Positions 53–112 (GEKGDPGEEGKHGKVGRMGPKGIKGELGDMGDQGNIGKTGPIGKKGDKGEKGLLGIPGEK) constitute a Collagen-like domain. In terms of domain architecture, C-type lectin spans 155–271 (TEEKFYYIVQ…CHLTMYFVCE (117 aa)). 2 disulfide bridges follow: C176-C270 and C248-C262. A glycan (N-linked (GlcNAc...) asparagine) is linked at N258.

The protein belongs to the COLEC10/COLEC11 family. Highly expressed in liver, placenta and adrenal gland. Moderately expressed in small intestine, lung, stomach and prostate. Weakly expressed in trachea and spleen.

It is found in the secreted. Its subcellular location is the golgi apparatus. It localises to the cytoplasm. Lectin that binds to various sugars: galactose &gt; mannose = fucose &gt; N-acetylglucosamine &gt; N-acetylgalactosamine. Acts as a chemoattractant, probably involved in the regulation of cell migration. In Homo sapiens (Human), this protein is Collectin-10 (COLEC10).